We begin with the raw amino-acid sequence, 1193 residues long: Falcilysin (1193 aa).

Residue histidine 129 participates in Zn(2+) binding. Glutamate 132 functions as the Proton acceptor in the catalytic mechanism. Residues histidine 133 and glutamate 243 each contribute to the Zn(2+) site. A disordered region spans residues 376–404; it reads DKTNNHNNNHSNNQSSENNGYSNGSHSSD. Positions 380–394 are enriched in low complexity; sequence NHNNNHSNNQSSENN. Over residues 395–404 the composition is skewed to polar residues; that stretch reads GYSNGSHSSD. The stretch at 583-619 forms a coiled coil; it reads LLEGDENYAQEQENLEKQELKKRIENFNEQEKEQVIK.

Belongs to the peptidase M16 family. In terms of assembly, monomer. Component of the hemozoin formation complex (HFC) composed of falcipains FP2A and/or FP2B, plasmepsins PMII, PMIII/HAP and PMIV, heme detoxifying protein HDP and falcilysin FLN. The HFC complex is involved in hemoglobin degradation and detoxification of heme in the food vacuole during the asexual blood stage. The cofactor is Zn(2+). Post-translationally, does not require processing for targeting to the food vacuole or maturation.

It localises to the vacuole membrane. It is found in the plastid. Its subcellular location is the apicoplast. The protein resides in the vesicle. In the food vacuole, acts downstream of proteases plasmepsins PMI and PMII and falcipains during the catabolism of host hemoglobin by cleaving peptide fragments of alpha and beta hemoglobin subunits generated by PMI and PMII and falcipains. In the apicoplast, degrades apicoplast transit peptides after their cleavage. Prefers bulky hydrophobic amino acids in the P1' position at both acidic and neutral pH. At P2', prefers hydrophobic residues at acidic pH; at neutral pH, these same residues are abundant but prefers Arg. At P3', prefers hydrophobic residues, especially Met, at both pH conditions. At P4' and P5', prefers acidic residues at acidic pH, however, at neutral pH, the enzyme is less selective at these positions. The optimal site cleavage at acidic pH is YNEHS-|-FFMEE and, at neutral pH, MKRHS-|-FRMRG. The polypeptide is Falcilysin (Plasmodium falciparum (isolate 3D7)).